The chain runs to 471 residues: 5-hydroxytryptamine receptor 2A (471 aa).

Topologically, residues 1–80 (MEILCEDNIS…LQEKNWSALL (80 aa)) are extracellular. 5 N-linked (GlcNAc...) asparagine glycosylation sites follow: asparagine 8, asparagine 38, asparagine 44, asparagine 51, and asparagine 54. A helical transmembrane segment spans residues 81-97 (TTVVIILTIAGNILVIM). Over 98–111 (AVSLEKKLQNATNY) the chain is Cytoplasmic. The chain crosses the membrane as a helical span at residues 112-137 (FLMSLAIADMLLGFLVMPVSMLTILY). The Extracellular segment spans residues 138-146 (GYRWPLPSK). The chain crosses the membrane as a helical span at residues 147–171 (LCAVWIYLDVLFSTASIMHLCAISL). A disulfide bond links cysteine 148 and cysteine 227. Aspartate 155 provides a ligand contact to serotonin. Positions 172–174 (DRY) match the DRY motif; important for ligand-induced conformation changes motif. Topologically, residues 172-191 (DRYVAIQNPIHHSRFNSRTK) are cytoplasmic. A helical membrane pass occupies residues 192 to 215 (AFLKIIAVWTISVGISMPIPVFGL). Residues 216 to 232 (QDDSKVFKEGSCLLADD) are Extracellular-facing. A helical transmembrane segment spans residues 233–258 (NFVLIGSFVAFFIPLTIMVITYFLTI). Topologically, residues 259–322 (KSLQKEATLC…QSISNEQKAC (64 aa)) are cytoplasmic. The residue at position 280 (serine 280) is a Phosphoserine. Residues 323 to 348 (KVLGIVFFLFVVMWCPFFITNIMAVI) traverse the membrane as a helical segment. Residue asparagine 343 participates in serotonin binding. Cysteine 349 and cysteine 353 are disulfide-bonded. Residues 349-356 (CKESCNEN) lie on the Extracellular side of the membrane. A helical transmembrane segment spans residues 357–382 (VIGALLNVFVWIGYLSSAVNPLVYTL). The NPxxY motif; important for ligand-induced conformation changes and signaling motif lies at 376 to 380 (NPLVY). Residues 383-471 (FNKTYRSAFS…ETVNEKVSCV (89 aa)) lie on the Cytoplasmic side of the membrane. The short motif at 469–471 (SCV) is the PDZ-binding element.

The protein belongs to the G-protein coupled receptor 1 family. In terms of assembly, interacts (via C-terminus) with MPDZ and PATJ. May interact (via C-terminus) with MPP3, PRDX6, DLG4, DLG1, CASK, APBA1 and MAGI2. Interacts with GRM2 and DRD2; this may affect signaling. Detected in neurons in brain cortex. Detected in adult intestine, especially in mucosal epithelium, longitudinal and circular layers of muscularis externa and myenteric plexuses. Highly expressed in Paneth cells, and detected at lower levels in enterocytes (at protein level). Detected in neurons in the brain cortex.

It is found in the cell membrane. It localises to the cell projection. Its subcellular location is the dendrite. The protein resides in the axon. The protein localises to the cytoplasmic vesicle. It is found in the membrane. It localises to the caveola. Its subcellular location is the presynapse. With respect to regulation, G-protein coupled receptor activity is regulated by lipids: oleamide increases HTR2A-mediated activity. Functionally, G-protein coupled receptor for 5-hydroxytryptamine (serotonin). Also functions as a receptor for various drugs and psychoactive substances, including mescaline, psilocybin, 1-(2,5-dimethoxy-4-iodophenyl)-2-aminopropane (DOI) and lysergic acid diethylamide (LSD). Ligand binding causes a conformation change that triggers signaling via guanine nucleotide-binding proteins (G proteins) and modulates the activity of downstream effectors. HTR2A is coupled to G(q)/G(11) G alpha proteins and activates phospholipase C-beta, releasing diacylglycerol (DAG) and inositol 1,4,5-trisphosphate (IP3) second messengers that modulate the activity of phosphatidylinositol 3-kinase and promote the release of Ca(2+) ions from intracellular stores, respectively. Beta-arrestin family members inhibit signaling via G proteins and mediate activation of alternative signaling pathways. Affects neural activity, perception, cognition and mood. Plays a role in the regulation of behavior, including responses to anxiogenic situations and psychoactive substances. Plays a role in intestinal smooth muscle contraction, and may play a role in arterial vasoconstriction. The sequence is that of 5-hydroxytryptamine receptor 2A (Htr2a) from Mus musculus (Mouse).